A 370-amino-acid chain; its full sequence is Aminomethyltransferase (370 aa).

This sequence belongs to the GcvT family. As to quaternary structure, the glycine cleavage system is composed of four proteins: P, T, L and H.

It carries out the reaction N(6)-[(R)-S(8)-aminomethyldihydrolipoyl]-L-lysyl-[protein] + (6S)-5,6,7,8-tetrahydrofolate = N(6)-[(R)-dihydrolipoyl]-L-lysyl-[protein] + (6R)-5,10-methylene-5,6,7,8-tetrahydrofolate + NH4(+). Functionally, the glycine cleavage system catalyzes the degradation of glycine. In Clostridium botulinum (strain Langeland / NCTC 10281 / Type F), this protein is Aminomethyltransferase.